The following is a 185-amino-acid chain: Ribosome-recycling factor (185 aa).

Belongs to the RRF family.

It is found in the cytoplasm. Functionally, responsible for the release of ribosomes from messenger RNA at the termination of protein biosynthesis. May increase the efficiency of translation by recycling ribosomes from one round of translation to another. The protein is Ribosome-recycling factor of Geobacillus sp. (strain WCH70).